A 512-amino-acid chain; its full sequence is Sucrose-6-phosphate hydrolase (512 aa).

Substrate contacts are provided by residues 40–43, glutamine 59, tryptophan 67, 102–103, 165–166, glutamate 229, and tryptophan 311; these read WMND, FS, and RD. Residue aspartate 43 is part of the active site.

The protein belongs to the glycosyl hydrolase 32 family.

It localises to the cytoplasm. The enzyme catalyses Hydrolysis of terminal non-reducing beta-D-fructofuranoside residues in beta-D-fructofuranosides.. It participates in glycan biosynthesis; sucrose metabolism. The protein is Sucrose-6-phosphate hydrolase (sacA) of Zymomonas mobilis subsp. mobilis (strain ATCC 31821 / ZM4 / CP4).